The chain runs to 363 residues: Protein-glutamate methylesterase/protein-glutamine glutaminase 1 (363 aa).

The Response regulatory domain maps to 7 to 124 (KVLIVDDSAL…SRGMQEYARE (118 aa)). The residue at position 58 (aspartate 58) is a 4-aspartylphosphate. A CheB-type methylesterase domain is found at 164-356 (FSSTEKIIVI…RRLFGWLESQ (193 aa)). Active-site residues include serine 176, histidine 202, and aspartate 298.

This sequence belongs to the CheB family. Post-translationally, phosphorylated by CheA. Phosphorylation of the N-terminal regulatory domain activates the methylesterase activity.

The protein localises to the cytoplasm. The enzyme catalyses [protein]-L-glutamate 5-O-methyl ester + H2O = L-glutamyl-[protein] + methanol + H(+). The catalysed reaction is L-glutaminyl-[protein] + H2O = L-glutamyl-[protein] + NH4(+). Involved in chemotaxis. Part of a chemotaxis signal transduction system that modulates chemotaxis in response to various stimuli. Catalyzes the demethylation of specific methylglutamate residues introduced into the chemoreceptors (methyl-accepting chemotaxis proteins or MCP) by CheR. Also mediates the irreversible deamidation of specific glutamine residues to glutamic acid. The polypeptide is Protein-glutamate methylesterase/protein-glutamine glutaminase 1 (Geobacter metallireducens (strain ATCC 53774 / DSM 7210 / GS-15)).